The following is a 1571-amino-acid chain: Phospholipid-transporting ATPase DNF1 (1571 aa).

A disordered region spans residues 1-94 (MSGTFHGDGH…TPKLNNGSGT (94 aa)). Topologically, residues 1–214 (MSGTFHGDGH…TFLPKNILFQ (214 aa)) are cytoplasmic. Over residues 29–40 (EDTHIAPTHFDD) the composition is skewed to basic and acidic residues. Residues 42–56 (ATSNKYSRPQVSFND) show a composition bias toward polar residues. Serine 53 is subject to Phosphoserine. Acidic residues predominate over residues 66 to 76 (AEEFTFNDDTE). A Phosphothreonine modification is found at threonine 70. The segment covering 80 to 93 (HSFQPTPKLNNGSG) has biased composition (polar residues). The residue at position 81 (serine 81) is a Phosphoserine. Threonine 85 bears the Phosphothreonine mark. The residue at position 92 (serine 92) is a Phosphoserine. The residue at position 94 (threonine 94) is a Phosphothreonine. Serine 104 carries the post-translational modification Phosphoserine. Threonine 109 carries the phosphothreonine modification. A helical membrane pass occupies residues 215-235 (FHNFANVYFLVLIILGAFQIF). The segment at 234-241 (IFGVTNPG) is involved in phosphatidylcholine substrate selection. At 236-239 (GVTN) the chain is on the extracellular side. The helical transmembrane segment at 240–260 (PGLSAVPLVVIVIITAIKDAI) threads the bilayer. Topologically, residues 261–553 (EDSRRTVLDL…RISRELNFSV (293 aa)) are cytoplasmic. Phosphoserine is present on residues serine 351, serine 354, serine 358, and serine 365. A Phosphotyrosine modification is found at tyrosine 368. Residues 554 to 574 (VINFVLLFILCFVSGIANGVY) traverse the membrane as a helical segment. The Extracellular segment spans residues 575–594 (YDKKGRSRFSYEFGTIAGSA). An involved in phosphatidylcholine substrate selection region spans residues 586 to 590 (EFGTI). Residues 595-615 (ATNGFVSFWVAVILYQSLVPI) form a helical membrane-spanning segment. Over 616-1188 (SLYISVEIIK…WSYKRLAEMI (573 aa)) the chain is Cytoplasmic. The active-site 4-aspartylphosphate intermediate is the aspartate 667. Positions 667, 668, 669, 801, 842, 844, 847, and 871 each coordinate ATP. Aspartate 667 lines the Mg(2+) pocket. Threonine 669 provides a ligand contact to Mg(2+). Lysine 895 participates in a covalent cross-link: Glycyl lysine isopeptide (Lys-Gly) (interchain with G-Cter in ubiquitin). 7 residues coordinate ATP: arginine 909, threonine 910, threonine 989, glycine 990, aspartate 991, arginine 1104, and lysine 1110. Aspartate 1130 provides a ligand contact to Mg(2+). ATP contacts are provided by asparagine 1133 and aspartate 1134. Aspartate 1134 provides a ligand contact to Mg(2+). The helical transmembrane segment at 1189 to 1209 (PEFFYKNMIFALALFWYGIYN) threads the bilayer. The Extracellular portion of the chain corresponds to 1210 to 1219 (DFDGSYLYEY). A helical membrane pass occupies residues 1220–1240 (TYMMFYNLAFTSLPVIFLGIL). Residues 1241-1270 (DQDVNDTISLVVPQLYRVGILRKEWNQRKF) are Cytoplasmic-facing. The helical transmembrane segment at 1271 to 1291 (LWYMLDGLYQSIICFFFPYLV) threads the bilayer. Over 1292 to 1307 (YHKNMIVTSNGLGLDH) the chain is Extracellular. Residues 1308 to 1328 (RYFVGVYVTTIAVISCNTYVL) form a helical membrane-spanning segment. Over 1329-1334 (LHQYRW) the chain is Cytoplasmic. The helical transmembrane segment at 1335 to 1355 (DWFSGLFIALSCLVVFAWTGI) threads the bilayer. At 1356-1375 (WSSAIASREFFKAAARIYGA) the chain is on the extracellular side. Residues 1376-1396 (PSFWAVFFVAVLFCLLPRFTY) traverse the membrane as a helical segment. Arginine 1393 is a binding site for a 1,2-diacyl-sn-glycero-3-phospho-L-serine. At 1397–1571 (DSFQKFFYPT…ASLIGTQQNN (175 aa)) the chain is on the cytoplasmic side. Serine 1506 carries the phosphoserine modification. Position 1551 is a phosphothreonine (threonine 1551). Serine 1552 and serine 1563 each carry phosphoserine.

The protein belongs to the cation transport ATPase (P-type) (TC 3.A.3) family. Type IV subfamily. As to quaternary structure, component of a flippase complex consisting of DNF1 and LEM3. Interacts with LEM3; the interaction is direct and required for their mutual export from the endoplasmic reticulum. Requires Mg(2+) as cofactor. In terms of processing, phosphorylated by FPK1 and KIN82.

The protein resides in the cell membrane. It is found in the endosome membrane. Its subcellular location is the golgi apparatus. The protein localises to the trans-Golgi network membrane. It localises to the cell septum. The protein resides in the bud. It carries out the reaction ATP + H2O + phospholipidSide 1 = ADP + phosphate + phospholipidSide 2.. The enzyme catalyses a 1,2-diacyl-sn-glycero-3-phosphoethanolamine(out) + ATP + H2O = a 1,2-diacyl-sn-glycero-3-phosphoethanolamine(in) + ADP + phosphate + H(+). It catalyses the reaction a 1,2-diacyl-sn-glycero-3-phosphocholine(out) + ATP + H2O = a 1,2-diacyl-sn-glycero-3-phosphocholine(in) + ADP + phosphate + H(+). The catalysed reaction is a beta-D-glucosyl-(1&lt;-&gt;1')-N-acylsphing-4-enine(out) + ATP + H2O = a beta-D-glucosyl-(1&lt;-&gt;1')-N-acylsphing-4-enine(in) + ADP + phosphate + H(+). It carries out the reaction a 1,2-diacyl-sn-glycero-3-phospho-L-serine(out) + ATP + H2O = a 1,2-diacyl-sn-glycero-3-phospho-L-serine(in) + ADP + phosphate + H(+). Catalytic component of a P4-ATPase flippase complex which catalyzes the hydrolysis of ATP coupled to the transport of glucosylceramide, phosphatidylcholine, phosphatidylethanolamine, and small amounts of phosphatidylserine from the lumenal to the cytosolic leaflet of the cell membrane and ensures the maintenance of asymmetric distribution of phospholipids. Does not appear to transport sphingomyelin, inositol phosphoceramide, or phosphatidic acid. Required for efficient endocytosis. The sequence is that of Phospholipid-transporting ATPase DNF1 from Saccharomyces cerevisiae (strain ATCC 204508 / S288c) (Baker's yeast).